A 228-amino-acid polypeptide reads, in one-letter code: Growth arrest-specific protein 1 homolog (228 aa).

An N-terminal signal peptide occupies residues 1–17; sequence MRRVILPLVMTVTLCLA. N-linked (GlcNAc...) asparagine glycans are attached at residues N143 and N156. A lipid anchor (GPI-anchor amidated aspartate) is attached at D205. A propeptide spans 206-228 (removed in mature form); it reads SSVGHGFNILSAISVYLLTVLVF.

In terms of tissue distribution, pharynx muscle cells from its early formation, in the two-fold embryo, until the adult stage.

Its subcellular location is the cell membrane. In terms of biological role, role in pharynx function or development. The protein is Growth arrest-specific protein 1 homolog (phg-1) of Caenorhabditis elegans.